Consider the following 311-residue polypeptide: Methionyl-tRNA formyltransferase (311 aa).

Serine 112–proline 115 provides a ligand contact to (6S)-5,6,7,8-tetrahydrofolate.

This sequence belongs to the Fmt family.

The enzyme catalyses L-methionyl-tRNA(fMet) + (6R)-10-formyltetrahydrofolate = N-formyl-L-methionyl-tRNA(fMet) + (6S)-5,6,7,8-tetrahydrofolate + H(+). Attaches a formyl group to the free amino group of methionyl-tRNA(fMet). The formyl group appears to play a dual role in the initiator identity of N-formylmethionyl-tRNA by promoting its recognition by IF2 and preventing the misappropriation of this tRNA by the elongation apparatus. This Bradyrhizobium sp. (strain ORS 278) protein is Methionyl-tRNA formyltransferase.